We begin with the raw amino-acid sequence, 140 residues long: uncharacterized protein (140 aa).

Transmembrane regions (helical) follow at residues 4–24, 56–76, 84–104, and 109–129; these read LLLA…SFSG, EAFI…YLLW, SAAA…LFFS, and IRDV…YVLA.

It is found in the cell membrane. Its function is as follows. May be important for peptidoglycan remodeling. This is an uncharacterized protein from Bacillus subtilis (strain 168).